The primary structure comprises 36 residues: Photosystem II reaction center protein Y (36 aa).

Residues 1–4 (MDTR) lie on the Lumenal side of the membrane. A helical transmembrane segment spans residues 5-23 (LLVIAAPVLVAASWALFNI). Topologically, residues 24–36 (GRLAIQQIQRLSR) are stromal.

It belongs to the PsbY family. As to quaternary structure, PSII is composed of 1 copy each of membrane proteins PsbA, PsbB, PsbC, PsbD, PsbE, PsbF, PsbH, PsbI, PsbJ, PsbK, PsbL, PsbM, PsbT, PsbX, PsbY, PsbZ, Psb30/Ycf12, at least 3 peripheral proteins of the oxygen-evolving complex and a large number of cofactors. It forms dimeric complexes.

It localises to the plastid. The protein localises to the chloroplast thylakoid membrane. Functionally, loosely associated component of the core of photosystem II (PSII), it is not always seen in crystals. PSII is a light-driven water plastoquinone oxidoreductase, using light energy to abstract electrons from H(2)O, generating a proton gradient subsequently used for ATP formation. This Thalassiosira pseudonana (Marine diatom) protein is Photosystem II reaction center protein Y.